Consider the following 525-residue polypeptide: Lysine--tRNA ligase (525 aa).

The short motif at 40–48 (ASGIPHMGS) is the 'HIGH' region element. Residues 295-299 (KISKS) carry the 'KMSKS' region motif. K298 provides a ligand contact to ATP.

This sequence belongs to the class-I aminoacyl-tRNA synthetase family.

It is found in the cytoplasm. It carries out the reaction tRNA(Lys) + L-lysine + ATP = L-lysyl-tRNA(Lys) + AMP + diphosphate. In Cenarchaeum symbiosum (strain A), this protein is Lysine--tRNA ligase (lysS).